The sequence spans 174 residues: Putative serine protease 46 (174 aa).

A Peptidase S1 domain is found at 43–174 (VVKGKLVEVG…IGWGTTGKKG (132 aa)). Residues Cys-68 and Cys-84 are joined by a disulfide bond. Active-site charge relay system residues include His-83 and Asp-128.

This sequence belongs to the peptidase S1 family.

The polypeptide is Putative serine protease 46 (Homo sapiens (Human)).